Consider the following 90-residue polypeptide: DNA-binding protein HU-beta (90 aa).

It belongs to the bacterial histone-like protein family. Heterodimer of an alpha and a beta chain.

Functionally, histone-like DNA-binding protein which is capable of wrapping DNA to stabilize it, and thus to prevent its denaturation under extreme environmental conditions. This chain is DNA-binding protein HU-beta (hupB), found in Serratia marcescens.